The sequence spans 591 residues: Serine/threonine-protein kinase PAK 4 (591 aa).

A CRIB domain is found at 11-24; the sequence is ISAPSNFEHRVHTG. The interval 25 to 320 is linker; it reads FDQHEQKFTG…VVDPGDPRSY (296 aa). Serine 41 is subject to Phosphoserine. Lysine 78 is subject to N6-methyllysine. Positions 95-301 are disordered; sequence TRSNSLRRDS…PQREPQRVSH (207 aa). A phosphoserine mark is found at serine 104 and serine 148. The span at 149–164 shows a compositional bias: basic and acidic residues; that stretch reads GDRRRAGPEKRPKSSR. Serine 167 and serine 181 each carry phosphoserine. At threonine 187 the chain carries Phosphothreonine. Residues 191–202 are compositionally biased toward low complexity; the sequence is AGLASGAKLAAG. Position 195 is a phosphoserine (serine 195). Threonine 207 is subject to Phosphothreonine. Positions 242-260 are enriched in low complexity; that stretch reads SSSSSSRPPTRARGAPSPG. Residues serine 258 and serine 267 each carry the phosphoserine modification. Residues 271–290 are compositionally biased toward pro residues; the sequence is LAPPACTPAAPAVPGPPGPR. Phosphoserine is present on serine 291. Basic and acidic residues predominate over residues 292 to 301; the sequence is PQREPQRVSH. Residues 298-323 form a GEF-interaction domain (GID) region; that stretch reads RVSHEQFRAALQLVVDPGDPRSYLDN. In terms of domain architecture, Protein kinase spans 321 to 572; sequence LDNFIKIGEG…AAELLKHPFL (252 aa). ATP is bound by residues 327 to 335, lysine 350, and 396 to 398; these read IGEGSTGIV and EFL. The active-site Proton acceptor is aspartate 440. Residue 458 to 460 coordinates ATP; it reads DFG. Phosphoserine; by autocatalysis is present on serine 474.

Belongs to the protein kinase superfamily. STE Ser/Thr protein kinase family. STE20 subfamily. As to quaternary structure, interacts with FGFR2 and GRB2. Interacts tightly with GTP-bound but not GDP-bound CDC42/p21 and weakly with RAC1. Interacts with INKA1. Interacts with SH3RF2. Interacts with RHOU and PAXI; the PAK4-RHOU complex protects RHOU from ubiquitination and acts as a scaffold to suppport paxillin/PAXI phosphorylation. Post-translationally, autophosphorylated on serine residues when activated by CDC42/p21. Phosphorylated on tyrosine residues upon stimulation of FGFR2. Methylated by SETD6. In terms of processing, polyubiquitinated, leading to its proteasomal degradation. As to expression, highest expression in prostate, testis and colon.

Its subcellular location is the cytoplasm. It carries out the reaction L-seryl-[protein] + ATP = O-phospho-L-seryl-[protein] + ADP + H(+). The enzyme catalyses L-threonyl-[protein] + ATP = O-phospho-L-threonyl-[protein] + ADP + H(+). Inhibited by INKA1; which inhibits the serine/threonine-protein kinase activity by binding PAK4 in a substrate-like manner. In terms of biological role, serine/threonine-protein kinase that plays a role in a variety of different signaling pathways including cytoskeleton regulation, cell adhesion turnover, cell migration, growth, proliferation or cell survival. Activation by various effectors including growth factor receptors or active CDC42 and RAC1 results in a conformational change and a subsequent autophosphorylation on several serine and/or threonine residues. Phosphorylates and inactivates the protein phosphatase SSH1, leading to increased inhibitory phosphorylation of the actin binding/depolymerizing factor cofilin. Decreased cofilin activity may lead to stabilization of actin filaments. Phosphorylates LIMK1, a kinase that also inhibits the activity of cofilin. Phosphorylates integrin beta5/ITGB5 and thus regulates cell motility. Phosphorylates ARHGEF2 and activates the downstream target RHOA that plays a role in the regulation of assembly of focal adhesions and actin stress fibers. Stimulates cell survival by phosphorylating the BCL2 antagonist of cell death BAD. Alternatively, inhibits apoptosis by preventing caspase-8 binding to death domain receptors in a kinase independent manner. Plays a role in cell-cycle progression by controlling levels of the cell-cycle regulatory protein CDKN1A and by phosphorylating RAN. Promotes kinase-independent stabilization of RHOU, thereby contributing to focal adhesion disassembly during cell migration. The protein is Serine/threonine-protein kinase PAK 4 of Homo sapiens (Human).